Reading from the N-terminus, the 205-residue chain is MANAIYDRTIAFAGICQAVALVQQVAKNGYCDSDAFETSLKAITCTNPSNTLEVFGHESQLKLGLECLVKGIDSTPSGSEITRYLISLMALERKLSGRRDAMSQLGDRIQMIERQLDHFDLFDDQMISNLASIYLDVISPIGPRIQVTGTPAVLQQTANQHKVRALLLSGIRCAVLWRQVGGRRRHLIFGRKKMIEQAQILLARI.

This sequence belongs to the HflD family.

The protein localises to the cytoplasm. It is found in the cell inner membrane. This Vibrio cholerae serotype O1 (strain ATCC 39541 / Classical Ogawa 395 / O395) protein is High frequency lysogenization protein HflD homolog.